A 223-amino-acid chain; its full sequence is Ras-related protein Rab-37 (223 aa).

The span at 1–13 (MTGTPGAATAGDG) shows a compositional bias: low complexity. Positions 1–22 (MTGTPGAATAGDGEAPERSPPF) are disordered. N-acetylthreonine is present on Thr2. GTP is bound by residues Ser38, Gly39, Val40, Gly41, Lys42, Thr43, Cys44, and Thr62. Mg(2+) is bound at residue Thr43. 2 consecutive short sequence motifs (switch) follow at residues 52 to 67 (GAFL…GIDS) and 85 to 102 (DTAG…YYRD). Mg(2+) contacts are provided by Thr62 and Asp85. Residues Gly88, Asn143, Lys144, Asp146, Ser173, Ala174, and Lys175 each coordinate GTP. Residues Cys219 and Cys220 are each lipidated (S-geranylgeranyl cysteine). Cys220 carries the cysteine methyl ester modification. The propeptide at 221–223 (SFV) is removed in mature form.

The protein belongs to the small GTPase superfamily. Rab family. Interacts with RIMS1. Interacts (in GDP-bound form) with RPGR, RPGR functions as guanine exchange factor (GEF). The cofactor is Mg(2+). In terms of tissue distribution, expressed in the retina (at protein level). Specifically expressed in the bone marrow mast cells.

The protein resides in the cytoplasmic vesicle. The protein localises to the cell projection. Its subcellular location is the cilium. The catalysed reaction is GTP + H2O = GDP + phosphate + H(+). With respect to regulation, regulated by guanine nucleotide exchange factors (GEFs) including RPGR which promote the exchange of bound GDP for free GTP. Regulated by GTPase activating proteins (GAPs) which increase the GTP hydrolysis activity. Inhibited by GDP dissociation inhibitors (GDIs). Its function is as follows. The small GTPases Rab are key regulators of intracellular membrane trafficking, from the formation of transport vesicles to their fusion with membranes. Rabs cycle between an inactive GDP-bound form and an active GTP-bound form that is able to recruit to membranes different sets of downstream effectors directly responsible for vesicle formation, movement, tethering and fusion. Acts as an organizer for autophagosome biogenesis in a GTP-dependent manner. Involved in retinal homeostasis by autophagy regulation. In Mus musculus (Mouse), this protein is Ras-related protein Rab-37.